Consider the following 723-residue polypeptide: Aspartate--tRNA(Asp/Asn) ligase 1 (723 aa).

Residue E206 coordinates L-aspartate. Residues 230–233 form an aspartate region; sequence QLFK. Residue R252 coordinates L-aspartate. ATP-binding positions include 252–254 and Q261; that span reads RDE. H481 is a binding site for L-aspartate. E516 contributes to the ATP binding site. R523 is a binding site for L-aspartate. 568-571 is an ATP binding site; it reads GMDR.

The protein belongs to the class-II aminoacyl-tRNA synthetase family. Type 1 subfamily. Homodimer.

The protein localises to the cytoplasm. It carries out the reaction tRNA(Asx) + L-aspartate + ATP = L-aspartyl-tRNA(Asx) + AMP + diphosphate. Functionally, aspartyl-tRNA synthetase with relaxed tRNA specificity since it is able to aspartylate not only its cognate tRNA(Asp) but also tRNA(Asn). Reaction proceeds in two steps: L-aspartate is first activated by ATP to form Asp-AMP and then transferred to the acceptor end of tRNA(Asp/Asn). In Syntrophus aciditrophicus (strain SB), this protein is Aspartate--tRNA(Asp/Asn) ligase 1.